The following is a 211-amino-acid chain: Arginine exporter protein ArgO (211 aa).

Transmembrane regions (helical) follow at residues 1 to 21 (MLSY…PLGP), 37 to 57 (LMIA…GIFG), 68 to 88 (LLAL…FGAL), 111 to 131 (IIAT…DTFV), 147 to 167 (WFAL…ALLA), and 186 to 206 (LVGL…IHHI).

The protein belongs to the LysE/ArgO transporter (TC 2.A.75) family.

It localises to the cell inner membrane. It catalyses the reaction L-arginine(in) = L-arginine(out). In terms of biological role, involved in the export of arginine. Important to control the intracellular level of arginine and the correct balance between arginine and lysine. The sequence is that of Arginine exporter protein ArgO from Enterobacter sp. (strain 638).